We begin with the raw amino-acid sequence, 352 residues long: Ion-translocating oxidoreductase complex subunit D (352 aa).

The next 5 membrane-spanning stretches (helical) occupy residues 20–40 (IMLL…WFFG), 42–62 (GTLV…ALVL), 78–109 (ALLT…VIIA), 123–143 (PAMI…TSWL), and 148–168 (IAVN…GHTA). FMN phosphoryl threonine is present on Thr-187. 5 consecutive transmembrane segments (helical) span residues 214-234 (ILAG…GVWL), 242-262 (WHIP…GWLF), 267-287 (LAAP…FFIL), 301-321 (LIFG…GGYP), and 322-342 (DGVA…DYYT).

The protein belongs to the NqrB/RnfD family. The complex is composed of six subunits: RsxA, RsxB, RsxC, RsxD, RsxE and RsxG. FMN serves as cofactor.

The protein localises to the cell inner membrane. Its function is as follows. Part of a membrane-bound complex that couples electron transfer with translocation of ions across the membrane. Required to maintain the reduced state of SoxR. This is Ion-translocating oxidoreductase complex subunit D from Escherichia coli O6:K15:H31 (strain 536 / UPEC).